The sequence spans 507 residues: E3 SUMO-protein ligase PIAS4 (507 aa).

A2 bears the N-acetylalanine mark. K9 participates in a covalent cross-link: Glycyl lysine isopeptide (Lys-Gly) (interchain with G-Cter in SUMO2). The SAP domain occupies 12-46 (VMSFRVSDLQMLLGFVGRSKSGLKHELVTRALQLV). The LXXLL motif signature appears at 20–24 (LQMLL). Residue K35 forms a Glycyl lysine isopeptide (Lys-Gly) (interchain with G-Cter in SUMO); alternate linkage. K35 participates in a covalent cross-link: Glycyl lysine isopeptide (Lys-Gly) (interchain with G-Cter in SUMO2); alternate. Glycyl lysine isopeptide (Lys-Gly) (interchain with G-Cter in SUMO2) cross-links involve residues K56, K59, K68, and K69. K107 is modified (N6-acetyllysine). In terms of domain architecture, PINIT spans 112-272 (LGRLPTKTLK…SVALYLVRQL (161 aa)). K118 participates in a covalent cross-link: Glycyl lysine isopeptide (Lys-Gly) (interchain with G-Cter in SUMO2). K128 is covalently cross-linked (Glycyl lysine isopeptide (Lys-Gly) (interchain with G-Cter in SUMO)). An SP-RING-type zinc finger spans residues 304–385 (PDSEIATTGV…LSKILSECEG (82 aa)). Residues C335, H337, C358, and C361 each contribute to the Zn(2+) site. A disordered region spans residues 426–507 (APASSTPGIG…PFQKGLVPAC (82 aa)). The segment covering 434–450 (IGSGLSGPGSAGSGAGA) has biased composition (gly residues). Residues 474–489 (SEDEDEDEDDDEDEDE) are compositionally biased toward acidic residues.

This sequence belongs to the PIAS family. In terms of assembly, interacts with AR, GATA2, LEF1, TP53 and STAT1 (IFNG-induced). Interacts with TICAM1. Interacts with MTA1. Interacts with PRDM1/Blimp-1. Interacts with TRIM32 upon treatment with UVB and TNF-alpha. As to quaternary structure, (Microbial infection) Interacts ewith Moloney murine leukemia virus Capsid protein p30. Sumoylated. Lys-35 is the main site of sumoylation. Sumoylation is required for TCF4 sumoylation and transcriptional activation. Represses LEF1 transcriptional activity. SUMO1 is the preferred conjugate. In terms of processing, ubiquitinated by TRIM32 upon treatment with UVB and TNF-alpha. Widely expressed, with highest levels in testis. Also expressed in vascular endothelial cells, in primary keratinocytes and in the CNS, including cortex, olfactory bulb, spinal cord, thalamus and trigeminal ganglion. Low expression, if any, in liver and lung.

It localises to the nucleus. It is found in the PML body. The catalysed reaction is S-ubiquitinyl-[E2 ubiquitin-conjugating enzyme]-L-cysteine + [acceptor protein]-L-lysine = [E2 ubiquitin-conjugating enzyme]-L-cysteine + N(6)-ubiquitinyl-[acceptor protein]-L-lysine.. It functions in the pathway protein modification; protein sumoylation. Functionally, functions as an E3-type small ubiquitin-like modifier (SUMO) ligase, stabilizing the interaction between UBE2I and the substrate, and as a SUMO-tethering factor. Mediates sumoylation of ALKBH5, AXIN1, CEBPA, KLF8, GATA2, PARK7, HERC2, MYB, TCF4 and RNF168. Plays a crucial role as a transcriptional coregulation in various cellular pathways, including the STAT pathway, the p53/TP53 pathway, the Wnt pathway and the steroid hormone signaling pathway. Involved in gene silencing. In Wnt signaling, represses LEF1 and enhances TCF4 transcriptional activities through promoting their sumoylations. Enhances the sumoylation of MTA1 and may participate in its paralog-selective sumoylation. Binds to AT-rich DNA sequences, known as matrix or scaffold attachment regions (MARs/SARs). Catalyzes conjugation of SUMO2 to KAT5 in response to DNA damage, facilitating repair of DNA double-strand breaks (DSBs) via homologous recombination (HR). Mediates sumoylation of PARP1 in response to PARP1 trapping to chromatin. Mediates sumoylation of KLF8, repressiing KLF8 transcriptional activity and cell cycle progression into G(1) phase. Sumoylates ALKBH5 downstream of MAPK8/JNK1 and MAPK9/JNK2 in response to reactive oxygen species (ROS), inhibiting ALKBH5 RNA demethylase activity. This chain is E3 SUMO-protein ligase PIAS4 (Pias4), found in Mus musculus (Mouse).